Reading from the N-terminus, the 469-residue chain is Properdin (469 aa).

Positions 1–27 are cleaved as a signal peptide; sequence MITEGAQAPRLLLPPLLLLLTLPATGS. TSP type-1 domains follow at residues 28–76, 77–134, 136–191, 193–255, 257–313, 315–377, and 379–462; these read DPVL…QPCR, SPRW…QCCP, MGGW…QSCP, HGAW…PPCP, AGSW…VPCP, DGEW…QHCP, and KGSW…PACK. Disulfide bonds link cysteine 32/cysteine 56, cysteine 43/cysteine 72, and cysteine 57/cysteine 75. C-linked (Man) tryptophan glycosylation is found at tryptophan 83 and tryptophan 86. 7 cysteine pairs are disulfide-bonded: cysteine 89-cysteine 127, cysteine 93-cysteine 133, cysteine 104-cysteine 111, cysteine 132-cysteine 170, cysteine 148-cysteine 184, cysteine 152-cysteine 190, and cysteine 163-cysteine 174. 3 C-linked (Man) tryptophan glycosylation sites follow: tryptophan 139, tryptophan 142, and tryptophan 145. Threonine 151 carries O-linked (Fuc...) threonine glycosylation. 3 C-linked (Man) tryptophan glycosylation sites follow: tryptophan 196, tryptophan 199, and tryptophan 202. 3 disulfides stabilise this stretch: cysteine 205–cysteine 248, cysteine 209–cysteine 254, and cysteine 224–cysteine 238. Serine 208 carries an O-linked (Fuc...) serine glycan. Residues 218 to 238 are disordered; sequence ETRSRKCSAPEPSQKPPGKPC. Tryptophan 260 and tryptophan 263 each carry a C-linked (Man) tryptophan glycan. Intrachain disulfides connect cysteine 269-cysteine 306, cysteine 273-cysteine 312, and cysteine 284-cysteine 296. An O-linked (Fuc...) threonine glycan is attached at threonine 272. C-linked (Man) tryptophan glycosylation is found at tryptophan 321 and tryptophan 324. Intrachain disulfides connect cysteine 327–cysteine 370, cysteine 337–cysteine 376, and cysteine 350–cysteine 360. The interaction with Complement C3 beta chain stretch occupies residues 351 to 359; that stretch reads KGRKFDGHR. 3 C-linked (Man) tryptophan glycosylation sites follow: tryptophan 382, tryptophan 385, and tryptophan 388. 3 disulfide bridges follow: cysteine 391/cysteine 455, cysteine 395/cysteine 461, and cysteine 407/cysteine 439. N-linked (GlcNAc...) asparagine glycosylation is present at asparagine 428.

In terms of assembly, in plasma, properdin exists as dimers, trimers or tetramers in the relative proportions of 26:54:20. Interacts with the pro-C3-convertase enzyme complex (C3b-Bb) comprised of Complement C3 beta chain (C3b) and the Complement factor B Bb fragment (Bb), where it binds (via its TSP type-1 5 domain) with C3b and Bb. This interaction stabilizes the complex and allows it to become the active C3-convertase enzyme complex (C3b-Bb-FP). Interacts with C3b. Interacts with CFB.

The protein resides in the secreted. Functionally, a positive regulator of the alternate pathway of complement. It binds to and stabilizes the C3- and C5-convertase enzyme complexes. Inhibits CFI-CFH mediated degradation of Inhibits CFI-CFH mediated degradation of Complement C3 beta chain (C3b). In Pongo abelii (Sumatran orangutan), this protein is Properdin (CFP).